The following is a 523-amino-acid chain: Probable FAD synthase (523 aa).

A molybdenum cofactor biosynthesis protein-like region spans residues 20 to 111 (AIVVIGDEIL…TDQLHFSDEI (92 aa)). Residues 332-489 (QIALSFNGGK…SLGGRDNTVK (158 aa)) form an FAD synthase region.

The protein in the N-terminal section; belongs to the MoaB/Mog family. This sequence in the C-terminal section; belongs to the PAPS reductase family. FAD1 subfamily. Requires Mg(2+) as cofactor.

The catalysed reaction is FMN + ATP + H(+) = FAD + diphosphate. The protein operates within cofactor biosynthesis; FAD biosynthesis; FAD from FMN: step 1/1. Its function is as follows. Catalyzes the adenylation of flavin mononucleotide (FMN) to form flavin adenine dinucleotide (FAD) coenzyme. The protein is Probable FAD synthase of Caenorhabditis briggsae.